The following is a 288-amino-acid chain: MFKDFFNRSSKKRKYLTVQDSKQNEVPAGIMTKCPKCKKIMYTKELNENLNVCFNCDHHIALPAYKRIEAITDENSFVEFDKGMTSANPLDFPGYQEKIEKDQQKTDLSEAVVTGTAKLDGVQFGVAVMDARFRMGSMGSVVGEKICRIIDYATEHRLPFILFSASGGARMQEGIISLMQMGKTSVSLKRHSDAGLLYISYLTHPTTGGVSASFASVGDINLSEPKALIGFAGRRVIEQTINEKLPDDFQTAEFLLEHGQLDKVVHRKEMKETLAQLLKLHQEVKKDA.

The region spanning 30–288 (IMTKCPKCKK…KLHQEVKKDA (259 aa)) is the CoA carboxyltransferase N-terminal domain. The Zn(2+) site is built by Cys34, Cys37, Cys53, and Cys56. The C4-type zinc-finger motif lies at 34 to 56 (CPKCKKIMYTKELNENLNVCFNC).

This sequence belongs to the AccD/PCCB family. Acetyl-CoA carboxylase is a heterohexamer composed of biotin carboxyl carrier protein (AccB), biotin carboxylase (AccC) and two subunits each of ACCase subunit alpha (AccA) and ACCase subunit beta (AccD). It depends on Zn(2+) as a cofactor.

It is found in the cytoplasm. It catalyses the reaction N(6)-carboxybiotinyl-L-lysyl-[protein] + acetyl-CoA = N(6)-biotinyl-L-lysyl-[protein] + malonyl-CoA. It participates in lipid metabolism; malonyl-CoA biosynthesis; malonyl-CoA from acetyl-CoA: step 1/1. Its function is as follows. Component of the acetyl coenzyme A carboxylase (ACC) complex. Biotin carboxylase (BC) catalyzes the carboxylation of biotin on its carrier protein (BCCP) and then the CO(2) group is transferred by the transcarboxylase to acetyl-CoA to form malonyl-CoA. This Staphylococcus haemolyticus (strain JCSC1435) protein is Acetyl-coenzyme A carboxylase carboxyl transferase subunit beta.